The following is a 491-amino-acid chain: Ran-binding protein 3 (491 aa).

Positions 1 to 10 (MADLANEEKP) are enriched in basic and acidic residues. Disordered stretches follow at residues 1-177 (MADL…HCEE) and 255-292 (VLSP…KKES). Ala-2 carries the N-acetylalanine modification. Lys-9 and Lys-21 each carry N6-acetyllysine. Phosphoserine occurs at positions 32, 33, and 40. A Nuclear localization signal motif is present at residues 49-57 (PPVKRERTS). The segment covering 51 to 67 (VKRERTSSLTHSEEKSS) has biased composition (basic and acidic residues). Residue Thr-56 is modified to Phosphothreonine. Ser-58 bears the Phosphoserine mark. 2 stretches are compositionally biased toward polar residues: residues 111 to 124 (VLSQ…TNGV) and 133 to 149 (PATS…SPSE). Position 146 is a phosphoserine (Ser-146). Positions 152 to 162 (EETHTLEEKVP) are enriched in basic and acidic residues. 4 positions are modified to phosphoserine: Ser-257, Ser-277, Ser-279, and Ser-296. A compositionally biased stretch (low complexity) spans 275 to 286 (AQSGSESSSQEA). The region spanning 302 to 442 (KATAWTCLLE…LALRSRAEQE (141 aa)) is the RanBD1 domain. A disordered region spans residues 438 to 491 (RAEQEQEAKAPPPEPGATRATEEEDSDEDAVLAPSGVTGAGTGDEGDGQAPGST). Ser-463 is modified (phosphoserine).

In terms of assembly, interacts with CHC1 in a Ran-stimulated manner. Interacts with XPO1. Interacts (via its C-terminal R domain) with SMAD2 (dephosphorylated form via its MH1 and MH2 domains); the interaction results in the nuclear export of SMAD2 and termination of the TGF-beta signaling. Interacts (via its C-terminal R domain) with SMAD3 (dephosphorylated form via its MH1 domain); the interaction results in the nuclear export of SMAD3 and termination of the TGF-beta signaling. Post-translationally, phosphorylation at Ser-58 promotes its import into the nucleus.

It localises to the cytoplasm. It is found in the nucleus. Functionally, acts as a cofactor for XPO1/CRM1-mediated nuclear export, perhaps as export complex scaffolding protein. Bound to XPO1/CRM1, stabilizes the XPO1/CRM1-cargo interaction. In the absence of Ran-bound GTP prevents binding of XPO1/CRM1 to the nuclear pore complex. Binds to CHC1/RCC1 and increases the guanine nucleotide exchange activity of CHC1/RCC1. Recruits XPO1/CRM1 to CHC1/RCC1 in a Ran-dependent manner. Negative regulator of TGF-beta signaling through interaction with the R-SMAD proteins, SMAD2 and SMAD3, and mediating their nuclear export. In Mus musculus (Mouse), this protein is Ran-binding protein 3 (Ranbp3).